Reading from the N-terminus, the 495-residue chain is Lysine--tRNA ligase (495 aa).

Residues glutamate 406 and glutamate 413 each contribute to the Mg(2+) site.

It belongs to the class-II aminoacyl-tRNA synthetase family. Homodimer. Mg(2+) is required as a cofactor.

Its subcellular location is the cytoplasm. It carries out the reaction tRNA(Lys) + L-lysine + ATP = L-lysyl-tRNA(Lys) + AMP + diphosphate. This Leuconostoc mesenteroides subsp. mesenteroides (strain ATCC 8293 / DSM 20343 / BCRC 11652 / CCM 1803 / JCM 6124 / NCDO 523 / NBRC 100496 / NCIMB 8023 / NCTC 12954 / NRRL B-1118 / 37Y) protein is Lysine--tRNA ligase.